The chain runs to 152 residues: Transcriptional regulator MraZ (152 aa).

2 consecutive SpoVT-AbrB domains span residues 5-52 and 81-124; these read ATMV…PLPE and ASEC…DEQT.

Belongs to the MraZ family. In terms of assembly, forms oligomers.

It localises to the cytoplasm. It is found in the nucleoid. Functionally, negatively regulates its own expression and that of the subsequent genes in the proximal part of the division and cell wall (dcw) gene cluster. Acts by binding directly to DNA. May also regulate the expression of genes outside the dcw cluster. This is Transcriptional regulator MraZ from Yersinia pestis bv. Antiqua (strain Antiqua).